A 220-amino-acid chain; its full sequence is Cytidylate kinase (220 aa).

An ATP-binding site is contributed by 10 to 18 (GPAGAGKST).

This sequence belongs to the cytidylate kinase family. Type 1 subfamily.

The protein resides in the cytoplasm. It catalyses the reaction CMP + ATP = CDP + ADP. The enzyme catalyses dCMP + ATP = dCDP + ADP. This chain is Cytidylate kinase, found in Alkaliphilus metalliredigens (strain QYMF).